The primary structure comprises 575 residues: Sclareol synthase, chloroplastic (575 aa).

The N-terminal 51 residues, 1–51, are a transit peptide targeting the chloroplast; the sequence is MSLAFNVGVTPFSGQRVGSRKEKFPVQGFPVTTPNRSRLIVNCSLTTIDFM. Asp-329, Asp-333, Asn-473, Ser-477, and Glu-481 together coordinate Mg(2+). A DDXXD motif motif is present at residues 329-333; that stretch reads DDFFD.

This sequence belongs to the terpene synthase family.

Its subcellular location is the plastid. The protein resides in the chloroplast. It catalyses the reaction 8-hydroxycopalyl diphosphate + H2O = sclareol + diphosphate. The protein operates within secondary metabolite biosynthesis; terpenoid biosynthesis. Involved in the biosynthesis of labdane-type diterpenoid including sclareol, a diterpene-diol that is used as fragrance and flavoring, and has anticancer effects (able to kill leukemic and colon cancer cells by apoptosis). Sclareol can also be used as synthesis precursor of ambergris substitution fragance products such as ambrox. Terpene synthase that catalyzes the conversion of 8-hydroxy-copalyl diphosphate to sclareol. In Salvia sclarea (Clary sage), this protein is Sclareol synthase, chloroplastic.